Consider the following 349-residue polypeptide: tRNA uridine(34) hydroxylase (349 aa).

A Rhodanese domain is found at 146–240; that stretch reads DDPDAVFIDM…YARKAREQGL (95 aa). Cys200 functions as the Cysteine persulfide intermediate in the catalytic mechanism. The span at 314–328 shows a compositional bias: basic and acidic residues; the sequence is PEEEQRRRRAGRENG. The interval 314 to 349 is disordered; it reads PEEEQRRRRAGRENGNKIFNKSRGRLNTTLGIPDPE.

It belongs to the TrhO family.

The enzyme catalyses uridine(34) in tRNA + AH2 + O2 = 5-hydroxyuridine(34) in tRNA + A + H2O. Its function is as follows. Catalyzes oxygen-dependent 5-hydroxyuridine (ho5U) modification at position 34 in tRNAs. This Cronobacter sakazakii (strain ATCC BAA-894) (Enterobacter sakazakii) protein is tRNA uridine(34) hydroxylase.